An 839-amino-acid chain; its full sequence is Small conductance calcium-activated potassium channel protein 2 (839 aa).

4 disordered regions span residues 1–33, 64–115, 195–258, and 280–375; these read MPIV…QESP, QRGF…QQPG, ALRQ…RRES, and SNLS…KKNQ. Composition is skewed to low complexity over residues 198–212 and 219–235; these read QQYA…QYHQ and ATSP…GPPL. The segment covering 236–253 has biased composition (basic residues); that stretch reads SHHHHHPHPAHHQHHQPQ. A compositionally biased stretch (low complexity) spans 313-326; that stretch reads SSPSAAAAASSSAP. Positions 345-363 are enriched in gly residues; it reads GTGGGGSTGGGGGGSGHGS. A helical transmembrane segment spans residues 398–418; sequence ALIFGMFGIVVMVIETELSWG. Position 420 is a phosphotyrosine (tyrosine 420). The chain crosses the membrane as a helical span at residues 428 to 448; sequence LALKCLISLSTIILLGLIIVY. A helical transmembrane segment spans residues 474-494; that stretch reads IFFICLEILVCAIHPIPGNYT. The chain crosses the membrane as a helical span at residues 516–536; the sequence is IILSIPMFLRLYLIARVMLLH. A helical membrane pass occupies residues 565–585; sequence LMTICPGTVLLVFSISLWIIA. The segment at residues 605–625 is an intramembrane region (pore-forming); sequence FLGAMWLISITFLSIGYGDMV. The chain crosses the membrane as a helical span at residues 634 to 654; the sequence is VCLLTGIMGAGCTALVVAVVA. A calmodulin-binding region spans residues 672-748; that stretch reads DTQLTKRVKN…LVDLAKTQNI (77 aa). The segment covering 810–819 has biased composition (basic and acidic residues); it reads HVSYNAERSR. A disordered region spans residues 810–839; that stretch reads HVSYNAERSRSSSRRRRSSSTAPPTSSESS. Positions 828-839 are enriched in low complexity; the sequence is SSTAPPTSSESS.

Belongs to the potassium channel KCNN family. KCa2.2/KCNN2 subfamily. Homodimer. Heteromultimer with KCNN1 and KCNN3. The complex is composed of 4 channel subunits each of which binds to a calmodulin subunit which regulates the channel activity through calcium-binding. Interacts (via N-terminal domain) with MPP2. In terms of tissue distribution, expressed in atrial and ventricular myocytes with higher levels in atrial myocytes (at protein level). Highly expressed in brain, liver and colon with low levels in kidney and testis. In colon, detected in smooth muscle cells.

Its subcellular location is the membrane. It localises to the cytoplasm. It is found in the myofibril. The protein localises to the sarcomere. The protein resides in the z line. It catalyses the reaction K(+)(in) = K(+)(out). With respect to regulation, inhibited by bee venom neurotoxin apamin. Inhibited by UCL 1684 and tetraethylammonium (TEA). In terms of biological role, small conductance calcium-activated potassium channel that mediates the voltage-independent transmembrane transfer of potassium across the cell membrane through a constitutive interaction with calmodulin which binds the intracellular calcium allowing its opening. The current is characterized by a voltage-independent activation, an intracellular calcium concentration increase-dependent activation and a single-channel conductance of about 3 picosiemens. Also presents an inwardly rectifying current, thus reducing its already small outward conductance of potassium ions, which is particularly the case when the membrane potential displays positive values, above + 20 mV. The inward rectification could be due to a blockade of the outward current by intracellular divalent cations such as calcium and magnesium and could also be due to an intrinsic property of the channel pore, independent of intracellular divalent ions. There are three positively charged amino acids in the S6 transmembrane domain, close to the pore, that collectively control the conductance and rectification through an electrostatic mechanism. Additionally, electrostatic contributions from these residues also play an important role in determining the intrinsic open probability of the channel in the absence of calcium, affecting the apparent calcium affinity for activation. Forms an heteromeric complex with calmodulin, which is constitutively associated in a calcium-independent manner. Channel opening is triggered when calcium binds the calmodulin resulting in a rotary movement leading to the formation of the dimeric complex to open the gate. Plays a role in the repolarization phase of cardiac action potential. The chain is Small conductance calcium-activated potassium channel protein 2 from Mus musculus (Mouse).